Here is a 916-residue protein sequence, read N- to C-terminus: Oxoglutarate dehydrogenase (916 aa).

Belongs to the alpha-ketoglutarate dehydrogenase family. As to quaternary structure, homodimer. Part of the 2-oxoglutarate dehydrogenase (OGDH) complex composed of E1 (2-oxoglutarate dehydrogenase), E2 (dihydrolipoamide succinyltransferase) and E3 (dihydrolipoamide dehydrogenase); the complex contains multiple copies of the three enzymatic components (E1, E2 and E3). The cofactor is thiamine diphosphate.

The catalysed reaction is N(6)-[(R)-lipoyl]-L-lysyl-[protein] + 2-oxoglutarate + H(+) = N(6)-[(R)-S(8)-succinyldihydrolipoyl]-L-lysyl-[protein] + CO2. E1 component of the 2-oxoglutarate dehydrogenase (OGDH) complex which catalyzes the decarboxylation of 2-oxoglutarate, the first step in the conversion of 2-oxoglutarate to succinyl-CoA and CO(2). The polypeptide is Oxoglutarate dehydrogenase (sucA) (Buchnera aphidicola subsp. Baizongia pistaciae (strain Bp)).